A 338-amino-acid polypeptide reads, in one-letter code: Ketol-acid reductoisomerase (NADP(+)) (338 aa).

Residues Met1–Thr181 enclose the KARI N-terminal Rossmann domain. Residues Tyr24–Gln27, Arg47, and Ser52 contribute to the NADP(+) site. His107 is an active-site residue. Residue Gly133 participates in NADP(+) binding. In terms of domain architecture, KARI C-terminal knotted spans Asn182–Ile327. Positions 190, 194, 226, and 230 each coordinate Mg(2+). Substrate is bound at residue Ser251.

Belongs to the ketol-acid reductoisomerase family. Requires Mg(2+) as cofactor.

The catalysed reaction is (2R)-2,3-dihydroxy-3-methylbutanoate + NADP(+) = (2S)-2-acetolactate + NADPH + H(+). The enzyme catalyses (2R,3R)-2,3-dihydroxy-3-methylpentanoate + NADP(+) = (S)-2-ethyl-2-hydroxy-3-oxobutanoate + NADPH + H(+). It participates in amino-acid biosynthesis; L-isoleucine biosynthesis; L-isoleucine from 2-oxobutanoate: step 2/4. It functions in the pathway amino-acid biosynthesis; L-valine biosynthesis; L-valine from pyruvate: step 2/4. Involved in the biosynthesis of branched-chain amino acids (BCAA). Catalyzes an alkyl-migration followed by a ketol-acid reduction of (S)-2-acetolactate (S2AL) to yield (R)-2,3-dihydroxy-isovalerate. In the isomerase reaction, S2AL is rearranged via a Mg-dependent methyl migration to produce 3-hydroxy-3-methyl-2-ketobutyrate (HMKB). In the reductase reaction, this 2-ketoacid undergoes a metal-dependent reduction by NADPH to yield (R)-2,3-dihydroxy-isovalerate. This chain is Ketol-acid reductoisomerase (NADP(+)), found in Burkholderia mallei (strain NCTC 10229).